The chain runs to 441 residues: Ribosomal protein uS12 methylthiotransferase RimO (441 aa).

One can recognise an MTTase N-terminal domain in the interval 8-118; the sequence is PKIGFVSLGC…VLEHVHHYVP (111 aa). [4Fe-4S] cluster is bound by residues cysteine 17, cysteine 53, cysteine 82, cysteine 150, cysteine 154, and cysteine 157. Positions 136 to 373 constitute a Radical SAM core domain; sequence LTPRHYAYLK…MQLQQQISAE (238 aa). Residues 376 to 441 form the TRAM domain; sequence QEKVGKEILV…DEYDLWGSRV (66 aa).

This sequence belongs to the methylthiotransferase family. RimO subfamily. Requires [4Fe-4S] cluster as cofactor.

The protein resides in the cytoplasm. It carries out the reaction L-aspartate(89)-[ribosomal protein uS12]-hydrogen + (sulfur carrier)-SH + AH2 + 2 S-adenosyl-L-methionine = 3-methylsulfanyl-L-aspartate(89)-[ribosomal protein uS12]-hydrogen + (sulfur carrier)-H + 5'-deoxyadenosine + L-methionine + A + S-adenosyl-L-homocysteine + 2 H(+). Catalyzes the methylthiolation of an aspartic acid residue of ribosomal protein uS12. The polypeptide is Ribosomal protein uS12 methylthiotransferase RimO (Escherichia fergusonii (strain ATCC 35469 / DSM 13698 / CCUG 18766 / IAM 14443 / JCM 21226 / LMG 7866 / NBRC 102419 / NCTC 12128 / CDC 0568-73)).